The chain runs to 174 residues: MGIEEKAGNLGIVTTTLETVVNWGRTNAMWPLLFGLACCAIEMMGAQASNYDLSRFGMELNRASPRQADLMIVAGRVSRKMAPVVRRLYDQMPEPKWVIAMGDCAACGGIFNNYAIVQGVDEVVPVDVYVAGCPPRPEALIDGIMMLHQKVMREKISGKKESPIRIDQPLVQVK.

Residues C38, C39, C104, and C133 each contribute to the [4Fe-4S] cluster site.

It belongs to the complex I 20 kDa subunit family. NDH-1 is composed of 14 different subunits. Subunits NuoB, C, D, E, F, and G constitute the peripheral sector of the complex. [4Fe-4S] cluster serves as cofactor.

The protein localises to the cell membrane. It catalyses the reaction a quinone + NADH + 5 H(+)(in) = a quinol + NAD(+) + 4 H(+)(out). Functionally, NDH-1 shuttles electrons from NADH, via FMN and iron-sulfur (Fe-S) centers, to quinones in the respiratory chain. The immediate electron acceptor for the enzyme in this species is believed to be ubiquinone. Couples the redox reaction to proton translocation (for every two electrons transferred, four hydrogen ions are translocated across the cytoplasmic membrane), and thus conserves the redox energy in a proton gradient. This chain is NADH-quinone oxidoreductase subunit B 2, found in Chloroflexus aurantiacus (strain ATCC 29366 / DSM 635 / J-10-fl).